The primary structure comprises 179 residues: MSSRVLTPDVVGIDALVHDHQTVLAKAEGGVVAVFANNAPAFYAVTPARLAELLALEEKLARPGSDVDLDDQLYQEPQAAPVAVPMGKFAMYPDWQPDADFIRLAALWGVALREPVTTEELASFIAYWQAEGKVFHHVQWQQKLARSLQIGRASNGGLPKRDVNTVSEPDSQIPPGFRG.

A disordered region spans residues G156–G179.

The protein belongs to the DnaT family. As to quaternary structure, homooligomerizes. Interacts with PriB. Component of the replication restart primosome. Primosome assembly occurs via a 'hand-off' mechanism. PriA binds to replication forks, subsequently PriB then DnaT bind; DnaT then displaces ssDNA to generate the helicase loading substrate.

Its function is as follows. Involved in the restart of stalled replication forks, which reloads the replicative helicase on sites other than the origin of replication. Can function in multiple replication restart pathways. Displaces ssDNA from a PriB-ssDNA complex. Probably forms a spiral filament on ssDNA. This chain is Replication restart protein DnaT, found in Escherichia coli O157:H7.